The following is a 650-amino-acid chain: MSNTAKKSSRRETRAAASEYIYNLTGQPFPNSHKVYVEGTQNNIRVGMREITLSDTYIGGSDENPVYEPNEPLRVYDTSGPYTDPNFKLDVRQGLAKFREQWIESRGDTELLESVTSRFTQQRMADEGLDHLRFEHLPKIRRGKAGKNVTQMHYARQGIITPEMEYVAIRENMGRKKIHAELLAAQHKGESFGASIPDFITPEFVRDEIARGRAILPNNINHPETEPMIVGRNFLVKVNANIGNSSVSSSIEEEVEKMVWSTRWGADTVMDLSTGRYIHETREWVVRNSPVPIGTVPIYQALEKVNGVAEDLTWEIFRDTLIEQAEQGVDYFTIHAGVLLRYVPMTAKRVTGIVSRGGSIMAKWCLAHHKENFLYTHFEDICEILKQYDICFSLGDGLRPGSIADANDEAQFSELRTLGELTKLAWKHDVQVFIEGPGHVPMHMIKANMDEQLKHCDEAPFYTLGPLTTDIAPGYDHITSGIGAAQIAWYGCAMLCYVTPKEHLGLPNKEDVKEGLITYKIAAHAADLAKGHPGAQERDNALSKARFEFRWHDQFNIGLDPERAREYHDETLPQESGKVAHFCSMCGPKFCSMKISQEVREYAKDLEARGIDPANAADTITIKMIDVEAQMKAKSDEFKKTGSEIYHKAI.

Substrate-binding positions include Asn-241, Met-270, Tyr-299, His-335, 355 to 357 (SRG), 396 to 399 (DGLR), and Glu-435. His-439 is a binding site for Zn(2+). Substrate is bound at residue Tyr-462. His-503 contacts Zn(2+). Residues Cys-583, Cys-586, and Cys-591 each coordinate [4Fe-4S] cluster.

Belongs to the ThiC family. As to quaternary structure, homodimer. It depends on [4Fe-4S] cluster as a cofactor.

It carries out the reaction 5-amino-1-(5-phospho-beta-D-ribosyl)imidazole + S-adenosyl-L-methionine = 4-amino-2-methyl-5-(phosphooxymethyl)pyrimidine + CO + 5'-deoxyadenosine + formate + L-methionine + 3 H(+). It participates in cofactor biosynthesis; thiamine diphosphate biosynthesis. Its function is as follows. Catalyzes the synthesis of the hydroxymethylpyrimidine phosphate (HMP-P) moiety of thiamine from aminoimidazole ribotide (AIR) in a radical S-adenosyl-L-methionine (SAM)-dependent reaction. This Pseudoalteromonas translucida (strain TAC 125) protein is Phosphomethylpyrimidine synthase.